The chain runs to 385 residues: Putative transport protein MT1133 (385 aa).

8 helical membrane passes run 7 to 27 (LTQK…GAYF), 32 to 52 (FVLI…FKWF), 66 to 86 (LLSA…LAIV), 159 to 179 (SLAG…ALLV), 218 to 238 (FVIA…AGFH), 241 to 261 (FFIF…GGIV), 263 to 283 (IPFG…FVLL), and 319 to 339 (GITM…ILIV).

This sequence belongs to the autoinducer-2 exporter (AI-2E) (TC 2.A.86) family.

The protein localises to the cell membrane. The protein is Putative transport protein MT1133 of Mycobacterium tuberculosis (strain CDC 1551 / Oshkosh).